A 143-amino-acid polypeptide reads, in one-letter code: Deoxyuridine 5'-triphosphate nucleotidohydrolase (143 aa).

Substrate contacts are provided by residues 63-65 (RSG), N76, 80-82 (TID), and K90.

It belongs to the dUTPase family. The cofactor is Mg(2+).

It carries out the reaction dUTP + H2O = dUMP + diphosphate + H(+). It functions in the pathway pyrimidine metabolism; dUMP biosynthesis; dUMP from dCTP (dUTP route): step 2/2. Functionally, this enzyme is involved in nucleotide metabolism: it produces dUMP, the immediate precursor of thymidine nucleotides and it decreases the intracellular concentration of dUTP so that uracil cannot be incorporated into DNA. The protein is Deoxyuridine 5'-triphosphate nucleotidohydrolase of Finegoldia magna (strain ATCC 29328 / DSM 20472 / WAL 2508) (Peptostreptococcus magnus).